We begin with the raw amino-acid sequence, 900 residues long: Vacuolar membrane protein pep3 (900 aa).

The disordered stretch occupies residues 1-20; that stretch reads MSLAEDWIDPNSSEDSDIQE. TPR repeat units follow at residues 314 to 345, 373 to 406, 408 to 436, and 546 to 579; these read HLAF…SPHE, NNET…NTVL, GYAE…VEEV, and MKDQ…ETLI. One copy of the CHCR repeat lies at 602 to 756; that stretch reads DLDVHALIPS…MFSKKSGIKE (155 aa). The RING-type; atypical zinc-finger motif lies at 837-884; that stretch reads CWHCNQPLFSEPFVLFPCQHAFHRSCMLEKTYKLASEKNILKECQLCG.

It belongs to the VPS18 family.

It localises to the vacuole membrane. In terms of biological role, required for vacuolar biogenesis. This is Vacuolar membrane protein pep3 (pep3) from Schizosaccharomyces pombe (strain 972 / ATCC 24843) (Fission yeast).